The following is a 954-amino-acid chain: uncharacterized protein (954 aa).

An N-terminal signal peptide occupies residues 1–35 (MKILFNNTFELFCLFVFVTWALFLNNNGILYPVHC). The stretch at 381–415 (KNKISSARDDIQKDINKMESELINVSNEINRLDIV) forms a coiled coil. A disordered region spans residues 733–765 (NIRNDNNNNNNNNNNNSNNNNNNNNNNKDNSVA). Low complexity predominate over residues 736–763 (NDNNNNNNNNNNNSNNNNNNNNNNKDNS).

This is an uncharacterized protein from Plasmodium falciparum (isolate 3D7).